The primary structure comprises 550 residues: Medium-chain acyl-CoA ligase Mig (550 aa).

The signal sequence occupies residues 1–19; it reads MSDTTTAFTVPAVAKAVAA.

Belongs to the ATP-dependent AMP-binding enzyme family.

The protein resides in the secreted. It localises to the cell wall. The catalysed reaction is a medium-chain fatty acid + ATP + CoA = a medium-chain fatty acyl-CoA + AMP + diphosphate. It catalyses the reaction hexanoate + ATP + CoA = hexanoyl-CoA + AMP + diphosphate. The enzyme catalyses heptanoate + ATP + CoA = heptanoyl-CoA + AMP + diphosphate. It carries out the reaction octanoate + ATP + CoA = octanoyl-CoA + AMP + diphosphate. The catalysed reaction is decanoate + ATP + CoA = decanoyl-CoA + AMP + diphosphate. It catalyses the reaction dodecanoate + ATP + CoA = dodecanoyl-CoA + AMP + diphosphate. The enzyme catalyses tetradecanoate + ATP + CoA = tetradecanoyl-CoA + AMP + diphosphate. It carries out the reaction (9Z)-octadecenoate + ATP + CoA = (9Z)-octadecenoyl-CoA + AMP + diphosphate. The catalysed reaction is (9Z,12Z,15Z)-octadecatrienoate + ATP + CoA = (9Z,12Z,15Z)-octadecatrienoyl-CoA + AMP + diphosphate. It catalyses the reaction (5Z,8Z,11Z,14Z)-eicosatetraenoate + ATP + CoA = (5Z,8Z,11Z,14Z)-eicosatetraenoyl-CoA + AMP + diphosphate. It functions in the pathway lipid metabolism; fatty acid metabolism. Inhibited by 2-hydroxydodecanoic acid, a typical inhibitor of medium-chain acyl-CoA synthetases. In terms of biological role, catalyzes the activation of medium-chain fatty acids as acyl-coenzyme A (acyl-CoA). Shows maximal activity with saturated fatty acids of medium-chain length between C6 and C12. Has lower activity with tridecanoic acid (C13), tetradecanoic acid (C14) and with unsaturated fatty acids like oleic acid (C18:1), linolenic acid (C18:3) and arachidonic acid (C20:4). Shows weak activity with some aromatic carbon acids. Involved in the metabolism of fatty acid during mycobacterial survival in macrophages. In Mycobacterium avium, this protein is Medium-chain acyl-CoA ligase Mig.